The chain runs to 267 residues: Tryptophan synthase alpha chain (267 aa).

Residues Glu47 and Asp58 each act as proton acceptor in the active site.

It belongs to the TrpA family. Tetramer of two alpha and two beta chains.

The enzyme catalyses (1S,2R)-1-C-(indol-3-yl)glycerol 3-phosphate + L-serine = D-glyceraldehyde 3-phosphate + L-tryptophan + H2O. Its pathway is amino-acid biosynthesis; L-tryptophan biosynthesis; L-tryptophan from chorismate: step 5/5. The alpha subunit is responsible for the aldol cleavage of indoleglycerol phosphate to indole and glyceraldehyde 3-phosphate. The protein is Tryptophan synthase alpha chain of Chlorobium limicola (strain DSM 245 / NBRC 103803 / 6330).